A 257-amino-acid polypeptide reads, in one-letter code: Granzyme M (257 aa).

Positions 1 to 23 are cleaved as a signal peptide; that stretch reads MEACVSSLLVLALGALSVGSSFG. Residues 24–25 constitute a propeptide, activation peptide; it reads TQ. One can recognise a Peptidase S1 domain in the interval 26–254; sequence IIGGREVIPH…YVSWIRKVTG (229 aa). An intrachain disulfide couples C51 to C67. Active-site charge relay system residues include H66 and D111. 3 disulfide bridges follow: C145–C213, C176–C192, and C203–C230. A glycan (N-linked (GlcNAc...) asparagine) is linked at N177. The Charge relay system role is filled by S207.

Belongs to the peptidase S1 family. Granzyme subfamily. Highly and constitutively expressed in activated natural killer (NK) cells.

The protein resides in the secreted. It is found in the cytoplasmic granule. Functionally, cleaves peptide substrates after methionine, leucine, and norleucine. Physiological substrates include EZR, alpha-tubulins and the apoptosis inhibitor BIRC5/Survivin. Promotes caspase activation and subsequent apoptosis of target cells. The sequence is that of Granzyme M (GZMM) from Homo sapiens (Human).